We begin with the raw amino-acid sequence, 62 residues long: LKCHNTQLPFIYKTCPEGKNLCFKATLKKFPLKFPVKRGCADNCPKNSALLKYVCCSTDKCN.

4 disulfide bridges follow: Cys3–Cys22, Cys15–Cys40, Cys44–Cys55, and Cys56–Cys61.

The protein belongs to the three-finger toxin family. Short-chain subfamily. Orphan group XV sub-subfamily. As to expression, expressed by the venom gland.

It is found in the secreted. It localises to the target cell membrane. Has low cytotoxic activity. The polypeptide is Cytotoxin-like basic protein (Naja naja (Indian cobra)).